Here is a 397-residue protein sequence, read N- to C-terminus: Arginine biosynthesis bifunctional protein ArgJ (397 aa).

6 residues coordinate substrate: Thr-147, Lys-173, Thr-184, Glu-270, Asn-392, and Thr-397. Catalysis depends on Thr-184, which acts as the Nucleophile.

The protein belongs to the ArgJ family. In terms of assembly, heterotetramer of two alpha and two beta chains.

The protein resides in the cytoplasm. The enzyme catalyses N(2)-acetyl-L-ornithine + L-glutamate = N-acetyl-L-glutamate + L-ornithine. It carries out the reaction L-glutamate + acetyl-CoA = N-acetyl-L-glutamate + CoA + H(+). Its pathway is amino-acid biosynthesis; L-arginine biosynthesis; L-ornithine and N-acetyl-L-glutamate from L-glutamate and N(2)-acetyl-L-ornithine (cyclic): step 1/1. It participates in amino-acid biosynthesis; L-arginine biosynthesis; N(2)-acetyl-L-ornithine from L-glutamate: step 1/4. Catalyzes two activities which are involved in the cyclic version of arginine biosynthesis: the synthesis of N-acetylglutamate from glutamate and acetyl-CoA as the acetyl donor, and of ornithine by transacetylation between N(2)-acetylornithine and glutamate. The protein is Arginine biosynthesis bifunctional protein ArgJ of Streptococcus thermophilus (strain ATCC BAA-250 / LMG 18311).